The following is a 183-amino-acid chain: uncharacterized protein (183 aa).

The first 29 residues, 1-29 (MQCWQQPFLRFLQQPFFLATASLAGSSSS), serve as a signal peptide directing secretion. The tract at residues 149–183 (PGSTCDGSLKGRAYPSCVPKRDPEHSREESHPLSG) is disordered. Basic and acidic residues predominate over residues 167–183 (PKRDPEHSREESHPLSG).

The protein localises to the secreted. This is an uncharacterized protein from Homo sapiens (Human).